The primary structure comprises 371 residues: ADP-ribosylarginine hydrolase Tri1 (371 aa).

The segment at 1-61 (MIDLRSPNAL…LQSRACTLTP (61 aa)) is N-terminal extension. The segment at 70-362 (GALLGLAIGD…LFDRAPQVDE (293 aa)) is ADP-ribosyl hydrolase domain. Residues Thr-112, Asp-113, Asp-114, Asp-157, and Asp-313 each contribute to the Mg(2+) site.

This sequence belongs to the ADP-ribosylglycohydrolase family. Mg(2+) is required as a cofactor.

It catalyses the reaction N(omega)-(ADP-D-ribosyl)-L-arginyl-[protein] + H2O = ADP-D-ribose + L-arginyl-[protein]. In terms of biological role, immunity component of an interbacterial competition system (also called effector-immunity systems). Expression in E.coli neutralizes the toxic effects of non-cognate S.proteamaculans effector protein Tre1 (Tre1-Sp); cannot be co-purified with Tre1-Sp from E.coli, suggesting they do not form a stable complex. Probably acts as an arginine mono-ADP-ribosylhydrolase, mediating the removal of mono-ADP-ribose attached to arginine residues on proteins. Probably de-ADP-ribosylates FtsZ and possibly other proteins; the ability to hydrolyze ADP-ribosyl moieties is not essential for neutralization of its cognate toxin, strongly suggesting its N-terminal extension occludes the active site of cognate toxin Tre1. The sequence is that of ADP-ribosylarginine hydrolase Tri1 from Pseudomonas putida (strain GB-1).